Reading from the N-terminus, the 950-residue chain is Translation initiation factor IF-2 (950 aa).

Disordered regions lie at residues 69-92 (KTKT…AGKA) and 128-352 (KPKV…SNVP). Basic and acidic residues-rich tracts occupy residues 77-86 (AKSKQEDHPR), 128-158 (KPKV…EAKA), 165-186 (AEVK…EKKK), 200-234 (KRAE…DNRR), and 291-312 (NRRD…DGNR). Polar residues-rich tracts occupy residues 322 to 336 (NRNQ…NWNQ) and 343 to 352 (YQNNQSSNVP). Residues 448–619 (ERPAVVTIMG…LLVAEVQELK (172 aa)) form the tr-type G domain. The interval 457-464 (GHVDHGKT) is G1. Residue 457–464 (GHVDHGKT) coordinates GTP. The segment at 482-486 (GITQH) is G2. Residues 503–506 (DTPG) form a G3 region. GTP is bound by residues 503 to 507 (DTPGH) and 557 to 560 (NKID). Positions 557–560 (NKID) are G4. The interval 595–597 (SAK) is G5.

The protein belongs to the TRAFAC class translation factor GTPase superfamily. Classic translation factor GTPase family. IF-2 subfamily.

It is found in the cytoplasm. Its function is as follows. One of the essential components for the initiation of protein synthesis. Protects formylmethionyl-tRNA from spontaneous hydrolysis and promotes its binding to the 30S ribosomal subunits. Also involved in the hydrolysis of GTP during the formation of the 70S ribosomal complex. This chain is Translation initiation factor IF-2, found in Lactococcus lactis subsp. cremoris (strain SK11).